The chain runs to 115 residues: U31-theraphotoxin-Cg1b (115 aa).

The signal sequence occupies residues 1-18 (MKLCVIIIASLMVASVSG). A propeptide spanning residues 19–51 (RLRKIKGTELDKKMLLEKLGHGMDIRFEETPRE) is cleaved from the precursor. Intrachain disulfides connect cysteine 52-cysteine 67, cysteine 60-cysteine 73, cysteine 64-cysteine 113, and cysteine 66-cysteine 86.

It belongs to the neurotoxin 03 (Tx2) family. 02 subfamily. In terms of tissue distribution, expressed by the venom gland.

It is found in the secreted. Probable ion channel inhibitor. The polypeptide is U31-theraphotoxin-Cg1b (Chilobrachys guangxiensis (Chinese earth tiger tarantula)).